Here is a 497-residue protein sequence, read N- to C-terminus: 3-octaprenyl-4-hydroxybenzoate carboxy-lyase (497 aa).

Asn-175 provides a ligand contact to Mn(2+). Residues Ile-178 to Arg-180, Arg-192 to Leu-194, and Arg-197 to Gly-198 contribute to the prenylated FMN site. Residue Glu-241 coordinates Mn(2+). Asp-290 serves as the catalytic Proton donor.

This sequence belongs to the UbiD family. As to quaternary structure, homohexamer. It depends on prenylated FMN as a cofactor. Mn(2+) serves as cofactor.

It is found in the cell membrane. It carries out the reaction a 4-hydroxy-3-(all-trans-polyprenyl)benzoate + H(+) = a 2-(all-trans-polyprenyl)phenol + CO2. It functions in the pathway cofactor biosynthesis; ubiquinone biosynthesis. In terms of biological role, catalyzes the decarboxylation of 3-octaprenyl-4-hydroxy benzoate to 2-octaprenylphenol, an intermediate step in ubiquinone biosynthesis. This Shigella boydii serotype 4 (strain Sb227) protein is 3-octaprenyl-4-hydroxybenzoate carboxy-lyase.